The chain runs to 454 residues: uncharacterized protein (454 aa).

The N-terminal stretch at 1-18 is a signal peptide; that stretch reads MRRFTLFVFFLSISIAYA.

This is an uncharacterized protein from Caenorhabditis elegans.